We begin with the raw amino-acid sequence, 219 residues long: Interleukin-12 subunit alpha (219 aa).

The signal sequence occupies residues M1–A22. 3 disulfide bridges follow: C37-C110, C64-C196, and C85-C123. N93 and N107 each carry an N-linked (GlcNAc...) asparagine glycan.

Belongs to the IL-6 superfamily. In terms of assembly, heterodimer with IL12B; disulfide-linked. This heterodimer is known as interleukin IL-12. Heterodimer with EBI3/IL27B; not disulfide-linked. This heterodimer is known as interleukin IL-35. Interacts with NBR1; this interaction promotes IL-12 secretion.

It is found in the secreted. Its function is as follows. Heterodimerizes with IL12B to form the IL-12 cytokine or with EBI3/IL27B to form the IL-35 cytokine. IL-12 is primarily produced by professional antigen-presenting cells (APCs) such as B-cells and dendritic cells (DCs) as well as macrophages and granulocytes and regulates T-cell and natural killer-cell responses, induces the production of interferon-gamma (IFN-gamma), favors the differentiation of T-helper 1 (Th1) cells and is an important link between innate resistance and adaptive immunity. Mechanistically, exerts its biological effects through a receptor composed of IL12R1 and IL12R2 subunits. Binding to the receptor results in the rapid tyrosine phosphorylation of a number of cellular substrates including the JAK family kinases TYK2 and JAK2. In turn, recruited STAT4 gets phosphorylated and translocates to the nucleus where it regulates cytokine/growth factor responsive genes. As part of IL-35, plays essential roles in maintaining the immune homeostasis of the liver microenvironment and also functions as an immune-suppressive cytokine. Mediates biological events through unconventional receptors composed of IL12RB2 and gp130/IL6ST heterodimers or homodimers. Signaling requires the transcription factors STAT1 and STAT4, which form a unique heterodimer that binds to distinct DNA sites. This is Interleukin-12 subunit alpha (IL12A) from Homo sapiens (Human).